The sequence spans 618 residues: Poly(A)-specific ribonuclease PARN-like (618 aa).

A divalent metal cation is bound by residues S54, Q56, D332, and N418. The segment at 588 to 607 is disordered; sequence ALESSDTDPDSDTKPSEIDW.

It belongs to the CAF1 family. A divalent metal cation is required as a cofactor.

It is found in the nucleus. The protein localises to the cytoplasm. It catalyses the reaction Exonucleolytic cleavage of poly(A) to 5'-AMP.. Its function is as follows. 3'-exoribonuclease that has a preference for poly(A) tails of mRNAs, thereby efficiently degrading poly(A) tails. Exonucleolytic degradation of the poly(A) tail is often the first step in the decay of eukaryotic mRNAs. The polypeptide is Poly(A)-specific ribonuclease PARN-like (Arabidopsis thaliana (Mouse-ear cress)).